The chain runs to 72 residues: Large ribosomal subunit protein bL31 (72 aa).

Zn(2+) contacts are provided by Cys-16, Cys-18, Cys-37, and Cys-40.

The protein belongs to the bacterial ribosomal protein bL31 family. Type A subfamily. As to quaternary structure, part of the 50S ribosomal subunit. The cofactor is Zn(2+).

Functionally, binds the 23S rRNA. The chain is Large ribosomal subunit protein bL31 from Buchnera aphidicola subsp. Schizaphis graminum (strain Sg).